A 187-amino-acid polypeptide reads, in one-letter code: UPF0167 protein MT2352 (187 aa).

Belongs to the UPF0167 family.

The protein is UPF0167 protein MT2352 of Mycobacterium tuberculosis (strain CDC 1551 / Oshkosh).